We begin with the raw amino-acid sequence, 223 residues long: Ribosomal RNA small subunit methyltransferase G (223 aa).

S-adenosyl-L-methionine is bound by residues glycine 82, leucine 87, 133-134, and arginine 151; that span reads AE.

This sequence belongs to the methyltransferase superfamily. RNA methyltransferase RsmG family.

It is found in the cytoplasm. Functionally, specifically methylates the N7 position of guanine in position 518 of 16S rRNA. In Corynebacterium glutamicum (strain R), this protein is Ribosomal RNA small subunit methyltransferase G.